The chain runs to 102 residues: MIPGEMKIDAGEILLNDGRETVTLEVANTGDRPIQVGSHYHFYETNEALSFERQLAYGFRLDIAAGTAVRFEPGQSRTVQLVALSGKREVYGFAGKVMGALK.

The protein belongs to the urease beta subunit family. As to quaternary structure, heterotrimer of UreA (gamma), UreB (beta) and UreC (alpha) subunits. Three heterotrimers associate to form the active enzyme.

The protein resides in the cytoplasm. It carries out the reaction urea + 2 H2O + H(+) = hydrogencarbonate + 2 NH4(+). Its pathway is nitrogen metabolism; urea degradation; CO(2) and NH(3) from urea (urease route): step 1/1. This is Urease subunit beta from Methylobacillus flagellatus (strain ATCC 51484 / DSM 6875 / VKM B-1610 / KT).